A 387-amino-acid polypeptide reads, in one-letter code: Succinate--CoA ligase [ADP-forming] subunit beta (387 aa).

The 228-residue stretch at 9 to 236 (KGLFAKHNVP…RAATDPLELK (228 aa)) folds into the ATP-grasp domain. ATP-binding positions include K45, 52–54 (GRG), S94, and E99. Residues N191 and D205 each contribute to the Mg(2+) site. Substrate contacts are provided by residues N256 and 318-320 (GIT).

The protein belongs to the succinate/malate CoA ligase beta subunit family. As to quaternary structure, heterotetramer of two alpha and two beta subunits. It depends on Mg(2+) as a cofactor.

It carries out the reaction succinate + ATP + CoA = succinyl-CoA + ADP + phosphate. The catalysed reaction is GTP + succinate + CoA = succinyl-CoA + GDP + phosphate. It functions in the pathway carbohydrate metabolism; tricarboxylic acid cycle; succinate from succinyl-CoA (ligase route): step 1/1. Succinyl-CoA synthetase functions in the citric acid cycle (TCA), coupling the hydrolysis of succinyl-CoA to the synthesis of either ATP or GTP and thus represents the only step of substrate-level phosphorylation in the TCA. The beta subunit provides nucleotide specificity of the enzyme and binds the substrate succinate, while the binding sites for coenzyme A and phosphate are found in the alpha subunit. This chain is Succinate--CoA ligase [ADP-forming] subunit beta, found in Mycobacterium ulcerans (strain Agy99).